The primary structure comprises 97 residues: Small integral membrane protein 8 (97 aa).

Residues 1–24 are disordered; that stretch reads MSSAPEPPTFKKEPPKEKEFQSPG. Basic and acidic residues predominate over residues 9–20; it reads TFKKEPPKEKEF. The helical transmembrane segment at 48-70 threads the bilayer; it reads PVMAFGLVTLSLCVAYIGYLHAI.

It belongs to the SMIM8 family.

The protein localises to the membrane. The protein is Small integral membrane protein 8 (SMIM8) of Homo sapiens (Human).